The sequence spans 963 residues: uncharacterized protein (963 aa).

2 coiled-coil regions span residues 176–236 (NGRN…HIRM) and 373–467 (DYEW…KKTV). A helical transmembrane segment spans residues 468 to 488 (IAAGMLFIVLFSLLQQWIPAI). Coiled coils occupy residues 536–570 (RNKQ…AEMA) and 647–789 (ALHT…LEAS).

It localises to the cell membrane. This is an uncharacterized protein from Bacillus subtilis (strain 168).